The primary structure comprises 845 residues: Putative DEAD-box ATP-dependent RNA helicase 33 (845 aa).

2 disordered regions span residues 129–149 and 282–302; these read GHPD…PMSP and KFRK…NEGK. A compositionally biased stretch (acidic residues) spans 289-298; it reads STEEDSDEEG. Positions 375-403 match the Q motif motif; that stretch reads KRFDESCISPLTLKALSASGIVKMTRVQD. Residues 406–590 form the Helicase ATP-binding domain; sequence LSECLDGKDA…QLVLKRDHSY (185 aa). 419-426 contributes to the ATP binding site; that stretch reads AKTGTGKS. Positions 538–541 match the DEAD box motif; the sequence is DEAD. The 155-residue stretch at 624-778 folds into the Helicase C-terminal domain; sequence LLKEHINNMP…QVDQSMAKID (155 aa).

The protein belongs to the DEAD box helicase family.

It carries out the reaction ATP + H2O = ADP + phosphate + H(+). The polypeptide is Putative DEAD-box ATP-dependent RNA helicase 33 (RH33) (Arabidopsis thaliana (Mouse-ear cress)).